We begin with the raw amino-acid sequence, 302 residues long: Cell division protein FtsQ (302 aa).

Topologically, residues 1 to 43 are cytoplasmic; sequence MRPVDKKPVDRKIERETRYLRRDPAPSRWSYRYQRLMLTPAFR. A helical transmembrane segment spans residues 44–64; sequence AGVRLGTPVIIIALAVAVVFG. Residues 65 to 302 are Periplasmic-facing; that stretch reads RADSRDWIMG…SMPGRSAGRG (238 aa). One can recognise a POTRA domain in the interval 89–156; sequence FMVGSFAITG…GVLQIVIEER (68 aa).

Belongs to the FtsQ/DivIB family. FtsQ subfamily.

The protein localises to the cell inner membrane. Essential cell division protein. The polypeptide is Cell division protein FtsQ (Ketogulonicigenium vulgare (strain Y25)).